The chain runs to 439 residues: ATP-dependent RNA helicase RhlB (439 aa).

The short motif at 9–37 (QKFADLPLHPEVKQALAENGFEFCTPIQA) is the Q motif element. The Helicase ATP-binding domain maps to 40-219 (LPVLLQSKDI…YDHMNEPVKV (180 aa)). An ATP-binding site is contributed by 53-60 (AQTGTGKT). The short motif at 165–168 (DEAD) is the DEAD box element. The Helicase C-terminal domain occupies 243–390 (KMRLLLTLIE…VSNYDRDALL (148 aa)). A disordered region spans residues 395–439 (PPVKIHRRHPAGARNLRERSGAGRPQGAHRSGGRPPRHDRTRRQP). A compositionally biased stretch (basic residues) spans 425–439 (SGGRPPRHDRTRRQP).

This sequence belongs to the DEAD box helicase family. RhlB subfamily. As to quaternary structure, component of the RNA degradosome, which is a multiprotein complex involved in RNA processing and mRNA degradation.

It localises to the cytoplasm. The catalysed reaction is ATP + H2O = ADP + phosphate + H(+). DEAD-box RNA helicase involved in RNA degradation. Has RNA-dependent ATPase activity and unwinds double-stranded RNA. This chain is ATP-dependent RNA helicase RhlB, found in Shewanella sp. (strain ANA-3).